The chain runs to 207 residues: Ras-related protein Rab-8A (207 aa).

The GTP site is built by Ser-17, Gly-18, Val-19, Gly-20, Lys-21, Thr-22, Cys-23, Ser-35, Ser-39, and Thr-40. Residue Thr-22 coordinates Mg(2+). 2 consecutive short sequence motifs (switch) follow at residues 31–45 (DAFNSTFISTIGIDF) and 63–80 (DTAGQERFRTITTAYYRG). The Mg(2+) site is built by Thr-40 and Asp-63. Position 66 (Gly-66) interacts with GTP. The residue at position 72 (Thr-72) is a Phosphothreonine. Asn-121, Lys-122, Asp-124, Ala-152, and Lys-153 together coordinate GTP. Ser-181 and Ser-185 each carry phosphoserine. Cys-204 carries the post-translational modification Cysteine methyl ester. Cys-204 is lipidated: S-geranylgeranyl cysteine. A propeptide spans 205-207 (VLL) (removed in mature form).

The protein belongs to the small GTPase superfamily. Rab family. Interacts (GTP-bound form) with MICALL1; regulates RAB8A association with recycling endosomes. Interacts with MICALL2; competes with RAB13 and is involved in E-cadherin endocytic recycling. Interacts (GTP-bound form) with MICAL1, MICALCL, MICAL3, EHBP1 and EHBP1L1; at least in case of MICAL1, MICALCL, MICAL3 and EHBP1L1 two molecules of RAB8A can bind to one molecule of the effector protein; ternary complexes of RAB8A, RAB13 and either MICAL1 or EHBP1L1 are possible. Interacts with EHD1. Interacts with MAP4K2 and SYTL4. Interacts with SGSM1 and SGSM3. Interacts with RABIF, RIMS2, RPH3A and RPH3A. Interacts with OPTN. Interacts with RAB3IP, RAB3IP functions as guanine exchange factor (GEF). Interacts with MYO5B. Interacts with CIMAP3. Interacts with BIRC6/bruce. Interacts with OCRL. Interacts with AHI1. Interacts with DCDC1. Interacts with LRRK2; interaction facilitates phosphorylation of Thr-72. Interacts with RAB31P, GDI1, GDI2, CHM, CHML, RABGGTA, RABGGTB, TBC1D15 and INPP5B; these interactions are dependent on Thr-72 not being phosphorylated. Interacts with RILPL1 and RILPL2; these interactions are dependent on the phosphorylation of Thr-72 by LRRK2. Interacts with DZIP1; prevents inhibition by the GDP-dissociation inhibitor GDI2. Interacts (in GDP-bound form) with RAB3IP/Rabin8, RAB3IP functions as guanine exchange factor (GEF) towards RAB8A. Interacts (in GDP-bound form) with RPGR, RPGR functions as GEF towards RAB8A. Requires Mg(2+) as cofactor. Phosphorylation of Thr-72 in the switch II region by LRRK2 prevents the association of RAB regulatory proteins, including CHM, CHML and RAB GDP dissociation inhibitors GDI1 and GDI2. Phosphorylation by LRRK2 is required for localization to stressed lysosomes.

Its subcellular location is the cell membrane. It is found in the golgi apparatus. It localises to the endosome membrane. The protein localises to the recycling endosome membrane. The protein resides in the cell projection. Its subcellular location is the cilium. It is found in the cytoplasmic vesicle. It localises to the phagosome membrane. The protein localises to the cytoplasm. The protein resides in the cytoskeleton. Its subcellular location is the microtubule organizing center. It is found in the centrosome. It localises to the centriole. The protein localises to the cilium basal body. The protein resides in the midbody. Its subcellular location is the lysosome. The enzyme catalyses GTP + H2O = GDP + phosphate + H(+). Regulated by guanine nucleotide exchange factors (GEFs) such as RAB3IP/Rabin8 and RPGR which promote the exchange of bound GDP for free GTP, GTPase activating proteins (GAPs) which increase the GTP hydrolysis activity, and GDP dissociation inhibitors (GDIs) which inhibit the dissociation of the nucleotide from the GTPase. Activated in response to insulin. In terms of biological role, the small GTPases Rab are key regulators of intracellular membrane trafficking, from the formation of transport vesicles to their fusion with membranes. Rabs cycle between an inactive GDP-bound form and an active GTP-bound form that is able to recruit to membranes different sets of downstream effectors directly responsible for vesicle formation, movement, tethering and fusion. RAB8A is involved in polarized vesicular trafficking and neurotransmitter release. Together with RAB11A, RAB3IP, the exocyst complex, PARD3, PRKCI, ANXA2, CDC42 and DNMBP promotes transcytosis of PODXL to the apical membrane initiation sites (AMIS), apical surface formation and lumenogenesis. Regulates the compacted morphology of the Golgi. Together with MYO5B and RAB11A participates in epithelial cell polarization. Also involved in membrane trafficking to the cilium and ciliogenesis. Together with MICALL2, may also regulate adherens junction assembly. May play a role in insulin-induced transport to the plasma membrane of the glucose transporter GLUT4 and therefore play a role in glucose homeostasis. Involved in autophagy. Participates in the export of a subset of neosynthesized proteins through a Rab8-Rab10-Rab11-dependent endososomal export route. Targeted to and stabilized on stressed lysosomes through LRRK2 phosphorylation. Suppresses stress-induced lysosomal enlargement through EHBP1 and EHNP1L1 effector proteins. This Canis lupus familiaris (Dog) protein is Ras-related protein Rab-8A (RAB8A).